Reading from the N-terminus, the 481-residue chain is Proline--tRNA ligase (481 aa).

Belongs to the class-II aminoacyl-tRNA synthetase family. ProS type 3 subfamily. In terms of assembly, homodimer.

It is found in the cytoplasm. The enzyme catalyses tRNA(Pro) + L-proline + ATP = L-prolyl-tRNA(Pro) + AMP + diphosphate. Its function is as follows. Catalyzes the attachment of proline to tRNA(Pro) in a two-step reaction: proline is first activated by ATP to form Pro-AMP and then transferred to the acceptor end of tRNA(Pro). This is Proline--tRNA ligase from Pelodictyon phaeoclathratiforme (strain DSM 5477 / BU-1).